The following is a 315-amino-acid chain: Methionyl-tRNA formyltransferase (315 aa).

113 to 116 (SLLP) provides a ligand contact to (6S)-5,6,7,8-tetrahydrofolate.

Belongs to the Fmt family.

The enzyme catalyses L-methionyl-tRNA(fMet) + (6R)-10-formyltetrahydrofolate = N-formyl-L-methionyl-tRNA(fMet) + (6S)-5,6,7,8-tetrahydrofolate + H(+). Its function is as follows. Attaches a formyl group to the free amino group of methionyl-tRNA(fMet). The formyl group appears to play a dual role in the initiator identity of N-formylmethionyl-tRNA by promoting its recognition by IF2 and preventing the misappropriation of this tRNA by the elongation apparatus. In Escherichia fergusonii (strain ATCC 35469 / DSM 13698 / CCUG 18766 / IAM 14443 / JCM 21226 / LMG 7866 / NBRC 102419 / NCTC 12128 / CDC 0568-73), this protein is Methionyl-tRNA formyltransferase.